The primary structure comprises 699 residues: MVRFFGLNKEKNEEKENTDLPADNEQNAAETSSSNVSGNEERIDPNSRDTNPENANNDDASTTFGSSIQSSSIFSRGRMTYGTGASSSMATSEMRSHSSGHSRSKNSKNLQGFKDVGKPLRAVSFLNPVKEEESQDTQNTLDVSSSTSSTLATSGNARENSFTSRRSITLEYIHKSLSELEENLVDIMDDIHQDVISISKAVIEAIEYFKEFLPTTRDRIPYRISLEKSSSLRKINKIVLHFLDNLLVSDAFSNSRSILLRRFYFFLKKLNLITDDDLISESGVLPCLSVFCIGSHCNLPSMDKLGMILDELTKMDSSIISDQEGAFIAPILRGITPKSSILTIMFGLPNLQHEHYEMIKVLYSLFPDVHMYCVKDYIKKAASAVGSIPSHTAATIDTIAPTKFQFSPPYAVSENPLELPISMSLSTETSAKITGTLGGYLFPQTGSDEKFSQFASCSFAITCAHVVLSEKQDYPNVMVPSNVLQTSYKKVLTKESDRYPDGSVEKTAFLEEVQRIDQNLNWQKSNKFGQVVWGERAIVDHRLSDFAIIKVNSSFKCQNTLGNGLKSFPDPTLRFQNLHVKRKIFKMKPGMKVFKIGASTGYTSGELNSTKLVYWADGKLQSSEFVVASPTPLFASAGDSGAWILTKLEDRLGLGLVGMLHSYDGEQRQFGLFTPIGDILERLHAVTKIQWDIDPQLDG.

Disordered stretches follow at residues 1–113 (MVRF…LQGF) and 129–158 (VKEEESQDTQNTLDVSSSTSSTLATSGNAR). Positions 1-381 (MVRFFGLNKE…YCVKDYIKKA (381 aa)) are excised as a propeptide. A compositionally biased stretch (basic and acidic residues) spans 8 to 18 (NKEKNEEKENT). Over residues 24 to 38 (NEQNAAETSSSNVSG) the composition is skewed to polar residues. Basic and acidic residues predominate over residues 39 to 51 (NEERIDPNSRDTN). Over residues 61–78 (STTFGSSIQSSSIFSRGR) the composition is skewed to low complexity. A compositionally biased stretch (polar residues) spans 83-93 (TGASSSMATSE). Residues 144–154 (SSSTSSTLATS) are compositionally biased toward low complexity. A serine protease region spans residues 459–699 (FAITCAHVVL…QWDIDPQLDG (241 aa)). Residues His465, Asp545, and Ser640 each act as charge relay system in the active site.

Belongs to the peptidase S64 family. Component of the plasma membrane SPS (SSY1-PTR3-SSY5) amino acid sensor complex. In terms of processing, the propeptide is autoproteolytically cleaved from the catalytic domain but remains associated, forming an inactive protease complex. This processing occurs even in the absence of signaling.

The protein localises to the cell membrane. Protease component of the SPS-sensor system, which regulates the expression of several amino acid-metabolizing enzymes and amino acid- and peptide-permeases in response to extracellular amino acid levels by controlling the activity of two transcription factors, STP1 and STP2. Catalyzes the activation of these transcription factors, which are synthesized as latent cytoplasmic precursors, by proteolytic removal of an N-terminal inhibitory domain containing cytoplasmic retention motifs. SSY5 binds as an inactive protease complex to STP1. In response to extracellular amino acids and dependent on the other SPS-sensor components, the inhibitory propeptide is induced to dissociate, and thereby enables the catalytic domain to process STP1. This Saccharomyces cerevisiae (strain AWRI1631) (Baker's yeast) protein is SPS-sensor serine protease component SSY5 (SSY5).